A 1441-amino-acid chain; its full sequence is Envelopment polyprotein (1441 aa).

Positions 1-13 (MICILVLITVAAA) are cleaved as a signal peptide. At 14–200 (SPVYQRCFQD…GSIANSICQN (187 aa)) the chain is on the lumenal side. Asn-57 is a glycosylation site (N-linked (GlcNAc...) asparagine; by host). Over 201-221 (IEIIILVTLTLLIFILLSILS) the chain traverses the membrane. Residues 222–305 (KTYICYLLMP…RAARVMCKSK (84 aa)) are Cytoplasmic-facing. A transmembrane span lies at residues 306-326 (GPASILSIITAVLVLTFVTPI). Topologically, residues 327 to 361 (NSMVLGESKETFELEDLPDDMLEMASRINSYYLTC) are lumenal. Positions 362–382 (ILNYAVSWGLVIIGLLIGLLF) form a transmembrane segment. Residues 383–450 (KKYQHRFLNV…NCLVQYKAKW (68 aa)) are Cytoplasmic-facing. Over 451–471 (MMNFLIIYIFLILIKDSAIVV) the chain traverses the membrane. Residues 472-1395 (QAAGTDFTTC…EPFKNLFGSY (924 aa)) lie on the Lumenal side of the membrane. A glycan (N-linked (GlcNAc...) asparagine; by host) is linked at Asn-490. The interval 1066–1087 (WGCEEFGCLAVSDGCVFGSCQD) is fusion peptide. N-linked (GlcNAc...) asparagine; by host glycosylation is present at Asn-1177. At 1396–1416 (IGIFYTFIISIVVLLVIIYVL) the chain is embedded in the membrane. Residues 1417 to 1433 (LPICFKLRDTLRKHEDA) lie on the Cytoplasmic side of the membrane.

The protein belongs to the orthobunyaviruses M polyprotein family. Glycoprotein C and Glycoprotein N interact with each other.

Its subcellular location is the virion membrane. The protein localises to the host Golgi apparatus membrane. It localises to the host endoplasmic reticulum membrane. In terms of biological role, glycoprotein C and glycoprotein N interact with each other and are present at the surface of the virion. They are able to attach the virion to a cell receptor and to promote fusion of membranes after endocytosis of the virion. The protein is Envelopment polyprotein (GP) of Bunyavirus La Crosse (isolate Human/United States/L78/1978).